The chain runs to 109 residues: Histidine-rich carboxyl terminus protein 1 (109 aa).

Residues 13-33 traverse the membrane as a helical segment; the sequence is WITGTALAFLMLLWLMALCLF. The interval 77–109 is disordered; the sequence is TSVGVHHHHHHSPHRLHHHKHHHRHHHAHGARR. Basic residues predominate over residues 81–109; that stretch reads VHHHHHHSPHRLHHHKHHHRHHHAHGARR.

It is found in the membrane. The sequence is that of Histidine-rich carboxyl terminus protein 1 (Hrct1) from Mus musculus (Mouse).